The sequence spans 328 residues: D-alanine--D-alanine ligase (328 aa).

Positions 118–317 (LSVLTKFNIP…MPQMLDNEIT (200 aa)) constitute an ATP-grasp domain. 146–201 (KKALGLPFFVKPNQSGSSLGVSKVDALDQLEKALEFAFAEDNEILIESYLNGTEVS) contacts ATP. Mg(2+) contacts are provided by Asp-272, Glu-284, and Asn-286.

It belongs to the D-alanine--D-alanine ligase family. It depends on Mg(2+) as a cofactor. The cofactor is Mn(2+).

It localises to the cytoplasm. The enzyme catalyses 2 D-alanine + ATP = D-alanyl-D-alanine + ADP + phosphate + H(+). The protein operates within cell wall biogenesis; peptidoglycan biosynthesis. Its function is as follows. Cell wall formation. The protein is D-alanine--D-alanine ligase of Flavobacterium psychrophilum (strain ATCC 49511 / DSM 21280 / CIP 103535 / JIP02/86).